We begin with the raw amino-acid sequence, 397 residues long: Protein shisa-8 (397 aa).

Positions 1–38 are cleaved as a signal peptide; that stretch reads MARAGARGLLGGRRPPGLRLALALRLALLLARPPSGRA. Residues 39-138 lie on the Extracellular side of the membrane; the sequence is GAPEAQGPAA…APRDPGRERS (100 aa). N-linked (GlcNAc...) asparagine glycosylation is present at N75. Residues 117 to 136 form a disordered region; it reads TGRPPARARDTAAPRDPGRE. Positions 123–136 are enriched in basic and acidic residues; sequence RARDTAAPRDPGRE. The chain crosses the membrane as a helical span at residues 139–159; the sequence is HTAVYAVCGVAALLVLAGIGA. The Cytoplasmic portion of the chain corresponds to 160 to 397; that stretch reads RLGLERAHSP…RTNSKTEVTV (238 aa). 2 disordered regions span residues 182–250 and 281–303; these read LLKQ…GGSL and FPAL…PDLP. Composition is skewed to pro residues over residues 188-197 and 288-303; these read PQEPLPPTLG and PRQP…PDLP.

Belongs to the shisa family. As to quaternary structure, interacts with AMPAR subunits GRIA1 and GRIA2.

It localises to the membrane. Functionally, may regulate trafficking and current kinetics of AMPA-type glutamate receptor (AMPAR) at synapses. The chain is Protein shisa-8 from Homo sapiens (Human).